Consider the following 220-residue polypeptide: MNIPPYRTRIKFCGMTRVGDVRLASELGVDAVGLIFASGSSRLLTVSAACAIRRTVAPMVDVVALFQNNSADEIHTVVRTVRPTLLQFHGKEEDAFCRTFNVPYLKAIPMAGAEAKRICTRTLYLKYPNAAGFIFDSHLKGGTGQTFDWSRLPIDLHHPFLLAGGITPENVFDAIAATVPWGVDVSSGIELQPGIKDGDKMRQFVEEVRRADGRRLLGVP.

This sequence belongs to the TrpF family.

The catalysed reaction is N-(5-phospho-beta-D-ribosyl)anthranilate = 1-(2-carboxyphenylamino)-1-deoxy-D-ribulose 5-phosphate. The protein operates within amino-acid biosynthesis; L-tryptophan biosynthesis; L-tryptophan from chorismate: step 3/5. The protein is N-(5'-phosphoribosyl)anthranilate isomerase of Xylella fastidiosa (strain M23).